A 192-amino-acid polypeptide reads, in one-letter code: Iron sulfur cluster assembly protein 1, mitochondrial (192 aa).

The N-terminal 53 residues, 1-53 (MSVFRRSVQCVGVLPSILAQRSSLLARPANLQFLKTNSSKFVPQVTANVSRRM), are a transit peptide targeting the mitochondrion.

This sequence belongs to the NifU family. In terms of assembly, homodimer. Component of the core Fe-S cluster (ISC) assembly machinery. [2Fe-2S] cluster serves as cofactor.

The protein resides in the mitochondrion. It localises to the mitochondrion matrix. The protein operates within cofactor biosynthesis; iron-sulfur cluster biosynthesis. In terms of biological role, scaffold protein for the de novo synthesis of iron-sulfur (Fe-S) clusters within mitochondria, which is required for maturation of both mitochondrial and cytoplasmic [2Fe-2S] and [4Fe-4S] proteins. First, a [2Fe-2S] cluster is transiently assembled on the scaffold protein isu1. In a second step, the cluster is released from isu1, transferred to a glutaredoxin, followed by the formation of mitochondrial [2Fe-2S] proteins, the synthesis of [4Fe-4S] clusters and their target-specific insertion into the recipient apoproteins. Cluster assembly on isu1 depends on the function of the cysteine desulfurase complex nfs1-isd11, which serves as the sulfur donor for cluster synthesis, the iron-binding protein frataxin as the putative iron donor, and the electron transfer chain comprised of ferredoxin reductase and ferredoxin, which receive their electrons from NADH. The protein is Iron sulfur cluster assembly protein 1, mitochondrial (isu1) of Schizosaccharomyces pombe (strain 972 / ATCC 24843) (Fission yeast).